We begin with the raw amino-acid sequence, 467 residues long: Argininosuccinate lyase 1 (467 aa).

Belongs to the lyase 1 family. Argininosuccinate lyase subfamily.

The protein resides in the cytoplasm. It catalyses the reaction 2-(N(omega)-L-arginino)succinate = fumarate + L-arginine. It functions in the pathway amino-acid biosynthesis; L-arginine biosynthesis; L-arginine from L-ornithine and carbamoyl phosphate: step 3/3. The polypeptide is Argininosuccinate lyase 1 (Rhizobium meliloti (strain 1021) (Ensifer meliloti)).